We begin with the raw amino-acid sequence, 898 residues long: Serine/threonine-protein kinase TAO3 (898 aa).

In terms of domain architecture, Protein kinase spans 24 to 277; the sequence is FIGLHEIGHG…SAELLRHDFV (254 aa). Residues 30-38 and Lys-53 each bind ATP; that span reads IGHGSFGAV. Asp-147 acts as the Proton acceptor in catalysis. 2 disordered regions span residues 316-362 and 405-425; these read TRNG…SQSS and DEAGHGDPRPEPRPTQSVQSQ. Residue Ser-324 is modified to Phosphoserine; by ATM. Residues Ser-331, Ser-343, Ser-346, and Ser-349 each carry the phosphoserine modification. Residues 334–351 are compositionally biased toward polar residues; sequence GTSLNREMDSLGSNHSIP. Low complexity predominate over residues 352–362; it reads SMSVSTGSQSS. Residue Thr-357 is modified to Phosphothreonine. Position 359 is a phosphoserine (Ser-359). Basic and acidic residues predominate over residues 405 to 416; sequence DEAGHGDPRPEP. Position 442 is a phosphoserine (Ser-442). Coiled-coil stretches lie at residues 452–502, 548–649, and 754–879; these read EQEN…THAN, FLES…HAML, and LKTL…DMES. The segment at 565–596 is disordered; the sequence is EEMNEDHSTPKKEKQERISKHKENLQHTQAEE. Residue Lys-830 is modified to N6-acetyllysine.

Belongs to the protein kinase superfamily. STE Ser/Thr protein kinase family. STE20 subfamily. Self-associates. Interacts with ERN1 and TRAF2. Interaction with TRAF2 is facilitated under ER stress conditions, such as treatment with tunicamycin, and may promote TRAF2 phosphorylation. Interacts (via N-terminus) with STK25; the interaction promotes STK25 abundance at the level of protein expression and/or stability. Autophosphorylated. Phosphorylation at Ser-324 by ATM following DNA damage is required for activation of the p38/MAPK14 stress-activated MAPK cascade. Phosphorylated at Ser-324 and on Tyr residues during T cell activation. Phosphorylated by LRRK2.

It localises to the cytoplasm. The protein localises to the cell membrane. Its subcellular location is the membrane raft. The protein resides in the lipid droplet. The catalysed reaction is L-seryl-[protein] + ATP = O-phospho-L-seryl-[protein] + ADP + H(+). The enzyme catalyses L-threonyl-[protein] + ATP = O-phospho-L-threonyl-[protein] + ADP + H(+). Serine/threonine-protein kinase that acts as a regulator of the p38/MAPK14 stress-activated MAPK cascade and of the MAPK8/JNK cascade. In response to DNA damage, involved in the G2/M transition DNA damage checkpoint by activating the p38/MAPK14 stress-activated MAPK cascade, probably by mediating phosphorylation of upstream MAP2K3 and MAP2K6 kinases. Inhibits basal activity of the MAPK8/JNK cascade and diminishes its activation in response to epidermal growth factor (EGF). Positively regulates canonical T cell receptor (TCR) signaling by preventing early PTPN6/SHP1-mediated inactivation of LCK, ensuring sustained TCR signaling that is required for optimal activation and differentiation of T cells. Phosphorylates PTPN6/SHP1 on 'Thr-394', leading to its polyubiquitination and subsequent proteasomal degradation. Required for cell surface expression of metalloprotease ADAM10 on type 1 transitional B cells which is necessary for their NOTCH-mediated development into marginal zone B cells. Also required for the NOTCH-mediated terminal differentiation of splenic conventional type 2 dendritic cells. Positively regulates osteoblast differentiation by acting as an upstream activator of the JNK pathway. Promotes JNK signaling in hepatocytes and positively regulates hepatocyte lipid storage by inhibiting beta-oxidation and triacylglycerol secretion while enhancing lipid synthesis. Restricts age-associated inflammation by negatively regulating differentiation of macrophages and their production of pro-inflammatory cytokines. Plays a role in negatively regulating the abundance of regulatory T cells in white adipose tissue. The polypeptide is Serine/threonine-protein kinase TAO3 (TAOK3) (Pongo abelii (Sumatran orangutan)).